A 328-amino-acid polypeptide reads, in one-letter code: D-cysteine desulfhydrase (328 aa).

Lys51 bears the N6-(pyridoxal phosphate)lysine mark.

Belongs to the ACC deaminase/D-cysteine desulfhydrase family. Homodimer. The cofactor is pyridoxal 5'-phosphate.

It carries out the reaction D-cysteine + H2O = hydrogen sulfide + pyruvate + NH4(+) + H(+). In terms of biological role, catalyzes the alpha,beta-elimination reaction of D-cysteine and of several D-cysteine derivatives. It could be a defense mechanism against D-cysteine. This Shigella flexneri serotype 5b (strain 8401) protein is D-cysteine desulfhydrase.